We begin with the raw amino-acid sequence, 504 residues long: MAAQAVSLLREVARLEAPLEELRALQSVVQAVPLHELREQAAELRLRPLFSLLNQNNREQTALCVSILERLLQAVEPIHLARNLRLDLQRGLTHPDDSVKTLTLSQIGRIVENSEAVTEILNNAELLKQIVYCIGGENLSVAKAAIKSLSRISLTQAGLEALFESNLLDDLKNVMKTNDVVRYRVYELIIDISSVSSESLNYCTTSGLVTQLLKELTGEDVLVRATCIEMVTSLAYTHHGRQYLAQEGVIDQISNIIVGADSDPFSGFYLPGFVKFFGNLAVMDSPQQICERYPVFLEKVFEMADSQDPTMIGVAVDTVGILGSSVEGKQVLQKTGTRFERVLMRVGYQAKNASTELKIRCLDAVSSLLYLSPEQQTDDFLGMTESWFSSMSRDSLELFRGISNQPFPELHCAALKVFTAIADQPWAQRLMFNSPGFVEFVMDRSVEHDKASKDAKYELVKALANSKTVAEIFGNSNYLRLRAYLSEGPYYVKPVATTAVEGAD.

N-acetylalanine is present on alanine 2.

This sequence belongs to the proteasome subunit S5B/HSM3 family. Interacts with PSMC1, PSMC2, PSMD1 and PSMD6. Part of transient complex containing PSMD5, PSMC2, PSMC1 and PSMD2 formed during the assembly of the 26S proteasome.

In terms of biological role, acts as a chaperone during the assembly of the 26S proteasome, specifically of the base subcomplex of the PA700/19S regulatory complex (RC). In the initial step of the base subcomplex assembly is part of an intermediate PSMD5:PSMC2:PSMC1:PSMD2 module which probably assembles with a PSMD10:PSMC4:PSMC5:PAAF1 module followed by dissociation of PSMD5. The chain is 26S proteasome non-ATPase regulatory subunit 5 (Psmd5) from Mus musculus (Mouse).